The following is a 1136-amino-acid chain: Collagen alpha-1(XIX) chain (1136 aa).

The N-terminal stretch at Met-1–Cys-23 is a signal peptide. N-linked (GlcNAc...) asparagine glycosylation is present at Asn-47. One can recognise a Laminin G-like domain in the interval Asn-47 to Ala-231. 4 disordered regions span residues Asp-252–Leu-272, Glu-289–Pro-673, Gly-699–Asp-1005, and Ser-1043–Lys-1136. Positions Gly-254–Gly-266 are enriched in low complexity. The segment at Glu-289–Ser-348 is triple-helical region 1 (COL1). Collagen-like domains follow at residues Gly-292 to Gly-346, Asp-347 to Gly-388, and Ser-389 to Gly-430. Basic and acidic residues-rich tracts occupy residues His-302–Leu-314 and Ile-332–Ala-344. The tract at residues Gly-367–Pro-426 is triple-helical region 2 (COL2). Residues Thr-387–Lys-401 show a composition bias toward low complexity. The segment covering Pro-414–Pro-426 has biased composition (pro residues). Positions Leu-428 to Gly-437 are enriched in low complexity. The segment at Gly-442–Ile-682 is triple-helical region 3 (COL3). The span at His-472–Glu-490 shows a compositional bias: basic and acidic residues. Low complexity-rich tracts occupy residues Leu-511–Pro-523 and Pro-567–Gly-577. Collagen-like domains are found at residues Gly-519–Gly-577, Ile-578–Gly-618, Gly-620–Pro-673, Lys-722–Gly-777, Leu-778–Gly-810, and Gly-833–Pro-891. A compositionally biased stretch (low complexity) spans Pro-634–Leu-645. The interval Gln-694–Pro-812 is triple-helical region 4 (COL4). Composition is skewed to basic and acidic residues over residues Gly-714–Val-725 and Glu-737–Glu-758. Low complexity predominate over residues Pro-764–Thr-788. Pro residues-rich tracts occupy residues Pro-800–Val-811 and Tyr-834–Asp-846. The triple-helical region 5 (COL5) stretch occupies residues Gly-827–Ala-1006. Residues Pro-877 to Pro-886 are compositionally biased toward low complexity. Over residues Pro-937–Asp-948 the composition is skewed to basic and acidic residues. Residues Arg-946 to Asp-948 carry the Cell attachment site motif. The tract at residues Gly-1048–Pro-1105 is triple-helical region 6 (COL6). Over residues Ser-1087–Ser-1101 the composition is skewed to low complexity. Residues Pro-1102 to Pro-1113 show a composition bias toward pro residues.

It belongs to the fibril-associated collagens with interrupted helices (FACIT) family. As to quaternary structure, oligomer; disulfide-linked. Post-translationally, prolines at the third position of the tripeptide repeating unit (G-X-Y) are hydroxylated in some or all of the chains.

It localises to the secreted. The protein localises to the extracellular space. Its subcellular location is the extracellular matrix. Its function is as follows. May act as a cross-bridge between fibrils and other extracellular matrix molecules. Involved in skeletal myogenesis in the developing esophagus. May play a role in organization of the pericellular matrix or the sphinteric smooth muscle. The chain is Collagen alpha-1(XIX) chain from Mus musculus (Mouse).